The chain runs to 296 residues: tRNA dimethylallyltransferase (296 aa).

9-16 (GPTAVGKT) is a binding site for ATP. 11–16 (TAVGKT) contacts substrate. The interval 34-37 (DSRQ) is interaction with substrate tRNA.

This sequence belongs to the IPP transferase family. As to quaternary structure, monomer. Requires Mg(2+) as cofactor.

It carries out the reaction adenosine(37) in tRNA + dimethylallyl diphosphate = N(6)-dimethylallyladenosine(37) in tRNA + diphosphate. In terms of biological role, catalyzes the transfer of a dimethylallyl group onto the adenine at position 37 in tRNAs that read codons beginning with uridine, leading to the formation of N6-(dimethylallyl)adenosine (i(6)A). The sequence is that of tRNA dimethylallyltransferase from Chloroflexus aurantiacus (strain ATCC 29366 / DSM 635 / J-10-fl).